A 1252-amino-acid polypeptide reads, in one-letter code: ATP-dependent helicase/nuclease subunit A (1252 aa).

Residues 6-489 (TNWTEEQKEA…VLLYKNFRSR (484 aa)) enclose the UvrD-like helicase ATP-binding domain. Residue 27–34 (AAAGSGKT) coordinates ATP. The UvrD-like helicase C-terminal domain occupies 523-811 (ANYEEIEENL…RIMSIHKSKG (289 aa)).

Belongs to the helicase family. AddA subfamily. As to quaternary structure, heterodimer of AddA and AddB/RexB. Mg(2+) serves as cofactor.

The enzyme catalyses Couples ATP hydrolysis with the unwinding of duplex DNA by translocating in the 3'-5' direction.. It catalyses the reaction ATP + H2O = ADP + phosphate + H(+). Its function is as follows. The heterodimer acts as both an ATP-dependent DNA helicase and an ATP-dependent, dual-direction single-stranded exonuclease. Recognizes the chi site generating a DNA molecule suitable for the initiation of homologous recombination. The AddA nuclease domain is required for chi fragment generation; this subunit has the helicase and 3' -&gt; 5' nuclease activities. The protein is ATP-dependent helicase/nuclease subunit A of Clostridium acetobutylicum (strain ATCC 824 / DSM 792 / JCM 1419 / IAM 19013 / LMG 5710 / NBRC 13948 / NRRL B-527 / VKM B-1787 / 2291 / W).